We begin with the raw amino-acid sequence, 224 residues long: Ribosomal RNA small subunit methyltransferase G (224 aa).

S-adenosyl-L-methionine contacts are provided by residues glycine 89, leucine 94, 140-141 (IE), and arginine 154.

It belongs to the methyltransferase superfamily. RNA methyltransferase RsmG family.

The protein resides in the cytoplasm. It carries out the reaction guanosine(527) in 16S rRNA + S-adenosyl-L-methionine = N(7)-methylguanosine(527) in 16S rRNA + S-adenosyl-L-homocysteine. Specifically methylates the N7 position of guanine in position 527 of 16S rRNA. The polypeptide is Ribosomal RNA small subunit methyltransferase G (Bordetella avium (strain 197N)).